A 378-amino-acid chain; its full sequence is AT-hook motif nuclear-localized protein 5 (378 aa).

Disordered stretches follow at residues 30 to 70 (QVAS…AEHR), 88 to 160 (VQPT…GRKQ), and 302 to 378 (NNNK…LTRG). Over residues 104 to 113 (VKKKRGRPRK) the composition is skewed to basic residues. The Bipartite nuclear localization signal motif lies at 105–113 (KKKRGRPRK). DNA-binding regions (a.T hook) lie at residues 105 to 117 (KKKR…YVPD) and 147 to 159 (KRAR…TGRK). One can recognise a PPC domain in the interval 171–314 (TSAGLAFAPH…KTIKQEIKPK (144 aa)). Polar residues-rich tracts occupy residues 316 to 327 (EPTNSEMETTPG) and 335 to 345 (STGQHTPQNFP).

Interacts with AHL29.

The protein resides in the nucleus. Its function is as follows. Transcription factor that specifically binds AT-rich DNA sequences related to the nuclear matrix attachment regions (MARs). This Arabidopsis thaliana (Mouse-ear cress) protein is AT-hook motif nuclear-localized protein 5.